Consider the following 207-residue polypeptide: Holliday junction branch migration complex subunit RuvA (207 aa).

A domain I region spans residues 1 to 65 (MYDYIRGILT…ETEHVLYGFS (65 aa)). Positions 66 to 144 (SRRERECFRM…DLLPLDSKAI (79 aa)) are domain II. Positions 145 to 155 (ASWESVKPSCM) are flexible linker. The segment at 155-207 (MDEGIQALAALGYSKPSAERMIAEAMSELPENASLAEILPIALKKNLQGLNKS) is domain III.

Belongs to the RuvA family. Homotetramer. Forms an RuvA(8)-RuvB(12)-Holliday junction (HJ) complex. HJ DNA is sandwiched between 2 RuvA tetramers; dsDNA enters through RuvA and exits via RuvB. An RuvB hexamer assembles on each DNA strand where it exits the tetramer. Each RuvB hexamer is contacted by two RuvA subunits (via domain III) on 2 adjacent RuvB subunits; this complex drives branch migration. In the full resolvosome a probable DNA-RuvA(4)-RuvB(12)-RuvC(2) complex forms which resolves the HJ.

It is found in the cytoplasm. The RuvA-RuvB-RuvC complex processes Holliday junction (HJ) DNA during genetic recombination and DNA repair, while the RuvA-RuvB complex plays an important role in the rescue of blocked DNA replication forks via replication fork reversal (RFR). RuvA specifically binds to HJ cruciform DNA, conferring on it an open structure. The RuvB hexamer acts as an ATP-dependent pump, pulling dsDNA into and through the RuvAB complex. HJ branch migration allows RuvC to scan DNA until it finds its consensus sequence, where it cleaves and resolves the cruciform DNA. This is Holliday junction branch migration complex subunit RuvA from Chlamydia caviae (strain ATCC VR-813 / DSM 19441 / 03DC25 / GPIC) (Chlamydophila caviae).